A 180-amino-acid chain; its full sequence is Translation initiation factor IF-3 (180 aa).

It belongs to the IF-3 family. As to quaternary structure, monomer.

It localises to the cytoplasm. Functionally, IF-3 binds to the 30S ribosomal subunit and shifts the equilibrium between 70S ribosomes and their 50S and 30S subunits in favor of the free subunits, thus enhancing the availability of 30S subunits on which protein synthesis initiation begins. The protein is Translation initiation factor IF-3 of Salmonella paratyphi A (strain ATCC 9150 / SARB42).